A 662-amino-acid polypeptide reads, in one-letter code: DNA helicase/primase complex-associated protein (662 aa).

The protein belongs to the herpesviridae HEPA family. In terms of assembly, associates with the primase and the helicase to form the helicase-primase complex. Interacts with the origin-binding protein. Interacts with the polymerase catalytic subunit.

It localises to the host nucleus. Component of the helicase/primase complex. Unwinds the DNA at the replication forks and generates single-stranded DNA for both leading and lagging strand synthesis. The primase synthesizes short RNA primers on the lagging strand that the polymerase presumably elongates using dNTPs. The primase-associated factor has no known catalytic activity in the complex and may serve to facilitate the formation of the replisome by directly interacting with the origin-binding protein and the polymerase. The polypeptide is DNA helicase/primase complex-associated protein (U74) (Human herpesvirus 6A (strain Uganda-1102) (HHV-6 variant A)).